The sequence spans 346 residues: tRNA N6-adenosine threonylcarbamoyltransferase (346 aa).

Positions 111 and 115 each coordinate Fe cation. Residues 134–138 (LVSGG), Asp-167, Gly-180, Asp-184, and Asn-280 contribute to the substrate site. Asp-308 contributes to the Fe cation binding site.

Belongs to the KAE1 / TsaD family. Fe(2+) is required as a cofactor.

The protein localises to the cytoplasm. The enzyme catalyses L-threonylcarbamoyladenylate + adenosine(37) in tRNA = N(6)-L-threonylcarbamoyladenosine(37) in tRNA + AMP + H(+). Functionally, required for the formation of a threonylcarbamoyl group on adenosine at position 37 (t(6)A37) in tRNAs that read codons beginning with adenine. Is involved in the transfer of the threonylcarbamoyl moiety of threonylcarbamoyl-AMP (TC-AMP) to the N6 group of A37, together with TsaE and TsaB. TsaD likely plays a direct catalytic role in this reaction. This chain is tRNA N6-adenosine threonylcarbamoyltransferase, found in Crocosphaera subtropica (strain ATCC 51142 / BH68) (Cyanothece sp. (strain ATCC 51142)).